Here is a 455-residue protein sequence, read N- to C-terminus: Yop proteins translocation protein P (455 aa).

Disordered regions lie at residues 38–82 (NKGN…QPGR) and 430–455 (DFQA…EAEE). Basic and acidic residues-rich tracts occupy residues 43 to 69 (HPKE…DGLR) and 439 to 449 (QESRQKRHVYE).

Belongs to the SpaN family.

It localises to the cytoplasm. Its function is as follows. Component of the yop secretion machinery. The chain is Yop proteins translocation protein P (yscP) from Yersinia pseudotuberculosis serotype I (strain IP32953).